A 143-amino-acid chain; its full sequence is MAIERTFSIIKPDAVAKNHIGAIYNRFETAGLKIIASKMIHLSKEQAEGFYAEHSERPFFGALVAFMTSGPIMVQTLEGENAVLAHREILGATNPAEAAEGTIRADFAESIDENAAHGSDSVASAEREVAYFFSAEELCPRTR.

The ATP site is built by K11, F59, R87, T93, R104, and N114. Residue H117 is the Pros-phosphohistidine intermediate of the active site.

Belongs to the NDK family. As to quaternary structure, homotetramer. The cofactor is Mg(2+).

The protein localises to the cytoplasm. The enzyme catalyses a 2'-deoxyribonucleoside 5'-diphosphate + ATP = a 2'-deoxyribonucleoside 5'-triphosphate + ADP. It carries out the reaction a ribonucleoside 5'-diphosphate + ATP = a ribonucleoside 5'-triphosphate + ADP. Functionally, major role in the synthesis of nucleoside triphosphates other than ATP. The ATP gamma phosphate is transferred to the NDP beta phosphate via a ping-pong mechanism, using a phosphorylated active-site intermediate. This chain is Nucleoside diphosphate kinase, found in Shewanella pealeana (strain ATCC 700345 / ANG-SQ1).